The primary structure comprises 786 residues: Endonuclease MutS2 (786 aa).

332-339 (GPNTGGKT) contributes to the ATP binding site. The region spanning 711–786 (IDLRGMDSEE…GTGVTVVILK (76 aa)) is the Smr domain.

This sequence belongs to the DNA mismatch repair MutS family. MutS2 subfamily. Homodimer. Binds to stalled ribosomes, contacting rRNA.

In terms of biological role, endonuclease that is involved in the suppression of homologous recombination and thus may have a key role in the control of bacterial genetic diversity. Functionally, acts as a ribosome collision sensor, splitting the ribosome into its 2 subunits. Detects stalled/collided 70S ribosomes which it binds and splits by an ATP-hydrolysis driven conformational change. Acts upstream of the ribosome quality control system (RQC), a ribosome-associated complex that mediates the extraction of incompletely synthesized nascent chains from stalled ribosomes and their subsequent degradation. Probably generates substrates for RQC. This is Endonuclease MutS2 from Clostridium perfringens (strain SM101 / Type A).